Reading from the N-terminus, the 122-residue chain is Fluoride-specific ion channel FluC (122 aa).

4 helical membrane-spanning segments follow: residues 1–21 (MYAFFTIFIGGGLGAVSRHYL), 35–55 (WAILLINLLGCLGIGFFSAYL), 67–87 (FLLTGFLGGFTTYSTFTLNLI), and 98–118 (FLNLFLHLGGGILCCFVGFWL). Na(+) contacts are provided by G74 and T77.

The protein belongs to the fluoride channel Fluc/FEX (TC 1.A.43) family.

The protein localises to the cell inner membrane. The enzyme catalyses fluoride(in) = fluoride(out). Na(+) is not transported, but it plays an essential structural role and its presence is essential for fluoride channel function. Its function is as follows. Fluoride-specific ion channel. Important for reducing fluoride concentration in the cell, thus reducing its toxicity. The chain is Fluoride-specific ion channel FluC from Dichelobacter nodosus (strain VCS1703A).